The primary structure comprises 290 residues: MAVTAALVKELRERTAAGMLDCKNALVEANGDIELAIENMRKNGQAKAAKKAGRIAAEGVILTKVANGVATMIELNSETDFVARDEGFIAFGSKLIEVASANKINDIETLNDSVVDGVKVSDARDTLVAKIGENISPRRVISVEGDNLGAYVHGGRIGVIAILQGGDEELAKDIAMHVAAANPQFVKPTDVPAEVVAKEKEIQLDIAMQSGKPADIAEKMVSGRMNKFTSEVSLTGQAFIKDPSTSVAQLLKAKNADVINFVRFEVGEGIEKKEEDFAAEVAAQMAAAKK.

Residues 79 to 82 (TDFV) form an involved in Mg(2+) ion dislocation from EF-Tu region.

This sequence belongs to the EF-Ts family.

It is found in the cytoplasm. Functionally, associates with the EF-Tu.GDP complex and induces the exchange of GDP to GTP. It remains bound to the aminoacyl-tRNA.EF-Tu.GTP complex up to the GTP hydrolysis stage on the ribosome. This Pseudoalteromonas atlantica (strain T6c / ATCC BAA-1087) protein is Elongation factor Ts.